Reading from the N-terminus, the 487-residue chain is RCC1 repeat-containing protein DDB_G0284033 (487 aa).

RCC1 repeat units lie at residues 66-127, 207-259, 260-313, 373-426, and 428-483; these read SNKV…FSGY, RSLI…ALSN, DGKL…ALTS, NGNI…IVET, and DGRF…SLNS.

This chain is RCC1 repeat-containing protein DDB_G0284033, found in Dictyostelium discoideum (Social amoeba).